The following is a 328-amino-acid chain: MEASYFIETIIKIVVIVLIFSALAGIGTYFERKVLAFMQRRLGPVNVGPFGLLQVAADGIKLFTKEDIVPTNVVGRIFKIAPVITAATAFMAAAAIPFLPSFTIFGYEVHPIVSDINIGILYILGIMGVGLYGPLLGGMASANKFSLISAARGAAVFISYEVVTGLSILAPIMMVGSLSLIDFNEYQSAGITSWIVWTQPVAFILFWIAAFAETGRTPFHLIANDHEIIDGFGTEYSGMRWGLFFIGEYANMFFISFVISLLFLGGYGDGSLLGALGLLAKVAFFFFFFLWTRAAWPDIRPDQLMWLCWKVLMPIALINIVITAIVMM.

Transmembrane regions (helical) follow at residues 10–30, 80–100, 118–138, 155–175, 191–211, 243–263, 272–292, and 306–326; these read IIKI…GTYF, IAPV…PFLP, IGIL…LLGG, AVFI…IMMV, ITSW…IAAF, LFFI…SLLF, LLGA…FLWT, and WLCW…TAIV.

This sequence belongs to the complex I subunit 1 family. As to quaternary structure, NDH-1 is composed of 14 different subunits. Subunits NuoA, H, J, K, L, M, N constitute the membrane sector of the complex.

The protein resides in the cell inner membrane. The catalysed reaction is a quinone + NADH + 5 H(+)(in) = a quinol + NAD(+) + 4 H(+)(out). In terms of biological role, NDH-1 shuttles electrons from NADH, via FMN and iron-sulfur (Fe-S) centers, to quinones in the respiratory chain. The immediate electron acceptor for the enzyme in this species is believed to be ubiquinone. Couples the redox reaction to proton translocation (for every two electrons transferred, four hydrogen ions are translocated across the cytoplasmic membrane), and thus conserves the redox energy in a proton gradient. This subunit may bind ubiquinone. This chain is NADH-quinone oxidoreductase subunit H, found in Sulfurimonas denitrificans (strain ATCC 33889 / DSM 1251) (Thiomicrospira denitrificans (strain ATCC 33889 / DSM 1251)).